A 635-amino-acid polypeptide reads, in one-letter code: Voltage-gated potassium channel KCNC4 (635 aa).

The segment at 1-24 (MISSVCVSSYRGRKSGNKPPSKTC) is disordered. Residues 1-28 (MISSVCVSSYRGRKSGNKPPSKTCLKEE) form an inactivation gate region. Topologically, residues 1–226 (MISSVCVSSY…EDPYSSRAAR (226 aa)) are cytoplasmic. Serine 8, serine 9, serine 15, and serine 21 each carry phosphoserine. Zn(2+) is bound by residues histidine 116, cysteine 122, cysteine 143, and cysteine 144. The segment at 160 to 180 (IFESPDGGGSGAGPSDEAGDD) is disordered. Residues 227–247 (VVAFASLFFILVSITTFCLET) form a helical membrane-spanning segment. N-linked (GlcNAc...) asparagine glycosylation is found at asparagine 256 and asparagine 265. The chain crosses the membrane as a helical span at residues 278–298 (EPILTYIEGVCVLWFTLEFLV). The Cytoplasmic portion of the chain corresponds to 299-312 (RIVCCPDTLDFVKN). Residues 313-333 (LLNIIDFVAILPFYLEVGLSG) traverse the membrane as a helical segment. Residues 345–364 (FLRVVRFVRILRIFKLTRHF) traverse the membrane as a helical; Voltage-sensor segment. Residues 365 to 380 (VGLRVLGHTLRASTNE) lie on the Cytoplasmic side of the membrane. The chain crosses the membrane as a helical span at residues 381–401 (FLLLIIFLALGVLIFATMIYY). Positions 436, 437, 438, and 439 each coordinate K(+). A Selectivity filter motif is present at residues 436–441 (TLGYGD). A helical membrane pass occupies residues 452–472 (VGALCALAGVLTIAMPVPVIV). Topologically, residues 473–635 (NNFGMYYSLA…PTAGTLFLPH (163 aa)) are cytoplasmic. The segment at 490-580 (KKRKKHVPRP…RRALRRSTTR (91 aa)) is disordered. A compositionally biased stretch (basic and acidic residues) spans 527 to 542 (AREEGMIERKRADSKQ).

It belongs to the potassium channel family. C (Shaw) (TC 1.A.1.2) subfamily. Kv3.4/KCNC4 sub-subfamily. As to quaternary structure, homotetramer. Heterotetramer of potassium channel proteins. Phosphorylation of serine residues in the inactivation gate inhibits rapid channel closure.

The protein localises to the membrane. The catalysed reaction is K(+)(in) = K(+)(out). In terms of biological role, voltage-gated potassium channel that opens in response to the voltage difference across the membrane, forming a potassium-selective channel through which potassium ions pass in accordance with their electrochemical gradient. The channel displays rapid activation and inactivation kinetics. The polypeptide is Voltage-gated potassium channel KCNC4 (Homo sapiens (Human)).